The chain runs to 553 residues: Vacuolar fusion protein MON1 homolog B (553 aa).

An N-acetylmethionine modification is found at Met1. Disordered stretches follow at residues 1-111 and 534-553; these read MEAG…DEDW and STPP…FTGL. Residues 23–35 show a composition bias toward basic and acidic residues; it reads FPREEAGDSERVH. Polar residues predominate over residues 52–72; sequence KDQPSSLLSPLPQTEAASSTC. Ser57 carries the phosphoserine modification. Positions 78–95 are enriched in low complexity; sequence AAASDSSPPGEPESNSEG. Acidic residues predominate over residues 96 to 108; it reads QGEDPDDGGDPSD. The span at 541–553 shows a compositional bias: polar residues; the sequence is ADQAPNNGLFTGL.

Belongs to the MON1/SAND family. As to quaternary structure, interacts with CCNT2; down-regulates CCNT2-mediated activation of viral promoters during herpes simplex virus 1/HHV-1 infection. Found in a complex with RMC1, CCZ1 MON1A and MON1B.

In Mus musculus (Mouse), this protein is Vacuolar fusion protein MON1 homolog B (Mon1b).